The primary structure comprises 336 residues: Iron-uptake system permease protein FeuC (336 aa).

The next 9 membrane-spanning stretches (helical) occupy residues 7-27, 57-77, 85-105, 120-140, 150-170, 191-211, 246-266, 280-300, and 308-328; these read LFIA…SFSV, VVMA…IQAI, PGIL…MLLF, MPLF…IFAW, IILV…FLSL, ANWT…PILI, VAII…GLIA, YILP…DFAG, and EVPA…YLLF.

This sequence belongs to the binding-protein-dependent transport system permease family. FecCD subfamily. In terms of assembly, the complex is composed of one ATP-binding protein (YusV), two transmembrane proteins (FeuB and FeuC) and a solute-binding protein (FeuA).

It is found in the cell membrane. Functionally, involved in the uptake of iron. Probably responsible for the translocation of the substrate across the membrane. Part of the ABC transporter complex FeuABC/YusV involved in import of the catecholate siderophores bacillibactin and enterobactin. In Bacillus subtilis (strain 168), this protein is Iron-uptake system permease protein FeuC (feuC).